The following is a 174-amino-acid chain: Nucleoside diphosphate kinase (174 aa).

ATP-binding residues include K14, F62, R90, T96, and R107. H123 acts as the Pros-phosphohistidine intermediate in catalysis.

It belongs to the NDK family. It depends on Mg(2+) as a cofactor.

The protein resides in the cytoplasm. The enzyme catalyses a 2'-deoxyribonucleoside 5'-diphosphate + ATP = a 2'-deoxyribonucleoside 5'-triphosphate + ADP. It catalyses the reaction a ribonucleoside 5'-diphosphate + ATP = a ribonucleoside 5'-triphosphate + ADP. Major role in the synthesis of nucleoside triphosphates other than ATP. The ATP gamma phosphate is transferred to the NDP beta phosphate via a ping-pong mechanism, using a phosphorylated active-site intermediate. The chain is Nucleoside diphosphate kinase from Thermococcus kodakarensis (strain ATCC BAA-918 / JCM 12380 / KOD1) (Pyrococcus kodakaraensis (strain KOD1)).